Here is a 122-residue protein sequence, read N- to C-terminus: UPF0102 protein Rleg2_4331 (122 aa).

Belongs to the UPF0102 family.

This Rhizobium leguminosarum bv. trifolii (strain WSM2304) protein is UPF0102 protein Rleg2_4331.